Consider the following 275-residue polypeptide: Formamidopyrimidine-DNA glycosylase (275 aa).

The Schiff-base intermediate with DNA role is filled by proline 2. Catalysis depends on glutamate 3, which acts as the Proton donor. Lysine 58 (proton donor; for beta-elimination activity) is an active-site residue. DNA is bound by residues histidine 93, arginine 111, and arginine 156. The segment at phenylalanine 241–arginine 275 adopts an FPG-type zinc-finger fold. The Proton donor; for delta-elimination activity role is filled by arginine 265.

The protein belongs to the FPG family. In terms of assembly, monomer. Zn(2+) is required as a cofactor.

It catalyses the reaction Hydrolysis of DNA containing ring-opened 7-methylguanine residues, releasing 2,6-diamino-4-hydroxy-5-(N-methyl)formamidopyrimidine.. It carries out the reaction 2'-deoxyribonucleotide-(2'-deoxyribose 5'-phosphate)-2'-deoxyribonucleotide-DNA = a 3'-end 2'-deoxyribonucleotide-(2,3-dehydro-2,3-deoxyribose 5'-phosphate)-DNA + a 5'-end 5'-phospho-2'-deoxyribonucleoside-DNA + H(+). In terms of biological role, involved in base excision repair of DNA damaged by oxidation or by mutagenic agents. Acts as a DNA glycosylase that recognizes and removes damaged bases. Has a preference for oxidized purines, such as 7,8-dihydro-8-oxoguanine (8-oxoG). Has AP (apurinic/apyrimidinic) lyase activity and introduces nicks in the DNA strand. Cleaves the DNA backbone by beta-delta elimination to generate a single-strand break at the site of the removed base with both 3'- and 5'-phosphates. This is Formamidopyrimidine-DNA glycosylase from Burkholderia cenocepacia (strain ATCC BAA-245 / DSM 16553 / LMG 16656 / NCTC 13227 / J2315 / CF5610) (Burkholderia cepacia (strain J2315)).